Here is a 103-residue protein sequence, read N- to C-terminus: Integration host factor subunit beta (103 aa).

A disordered region spans residues 62–81; that stretch reads RNPKTGESVALPGKHVPHFK.

This sequence belongs to the bacterial histone-like protein family. In terms of assembly, heterodimer of an alpha and a beta chain.

Functionally, this protein is one of the two subunits of integration host factor, a specific DNA-binding protein that functions in genetic recombination as well as in transcriptional and translational control. In Xanthomonas campestris pv. campestris (strain B100), this protein is Integration host factor subunit beta.